The primary structure comprises 284 residues: AA14 family lytic polysaccharide monooxygenase B (284 aa).

Positions 1–20 (MGYLSKLVTSVVFAIPLASA) are cleaved as a signal peptide. N-linked (GlcNAc...) asparagine glycosylation is found at Asn42, Asn96, Asn142, and Asn183. A disulfide bond links Cys197 and Cys218.

The protein belongs to the polysaccharide monooxygenase AA14 family. It depends on Cu(2+) as a cofactor.

Its subcellular location is the secreted. In terms of biological role, lytic polysaccharide monooxygenase (LPMO) that plays decomposes some specific network structures formed between cellulose and hemicellulose in the plant cell walls. Catalysis by LPMOs requires the reduction of the active-site copper from Cu(II) to Cu(I) by a reducing agent and H(2)O(2) or O(2) as a cosubstrate. The protein is AA14 family lytic polysaccharide monooxygenase B of Talaromyces rugulosus (Penicillium rugulosum).